Here is a 363-residue protein sequence, read N- to C-terminus: Neutral protease 2 homolog NFIA_102630 (363 aa).

An N-terminal signal peptide occupies residues 1–19 (MKVTVLASAILALINGALA). A propeptide spanning residues 20–172 (LPANAPTLDV…PQAIKLLDRR (153 aa)) is cleaved from the precursor. 2 cysteine pairs are disulfide-bonded: Cys-178/Cys-250 and Cys-257/Cys-275. A Zn(2+)-binding site is contributed by His-300. The active site involves Glu-301. Residues His-304 and Asp-315 each contribute to the Zn(2+) site.

It belongs to the peptidase M35 family. It depends on Zn(2+) as a cofactor.

It localises to the secreted. It carries out the reaction Preferential cleavage of bonds with hydrophobic residues in P1'. Also 3-Asn-|-Gln-4 and 8-Gly-|-Ser-9 bonds in insulin B chain.. Its function is as follows. Secreted metalloproteinase that allows assimilation of proteinaceous substrates. Shows high activities on basic nuclear substrates such as histone and protamine. This chain is Neutral protease 2 homolog NFIA_102630, found in Neosartorya fischeri (strain ATCC 1020 / DSM 3700 / CBS 544.65 / FGSC A1164 / JCM 1740 / NRRL 181 / WB 181) (Aspergillus fischerianus).